Consider the following 318-residue polypeptide: MNQDTQSANTQQEKKIAYNFNKLQKRLRRNVGNAIADFNMIEDGDKVMVCLSGGKDSYTLLDILLNLKLSAPIHFDIVAVNLDQKQPGFPEHILPEYLESIGVEYKIVEENTYGIVKEKIPEGKTTCSLCSRLRRGILYRTATELGATKIALGHHRDDMLETLFLNMFYGGKLKSMPPKLISDDGKQIVIRPLAYCKEKDIEKYSQAKQFPIIPCNLCGSQPNLQRQVVKEMLQTWDRQYPGRIETMFSAMQNITLSHLCDPSLFDFKGLKRGQVLDGVEGDIAFDKAEIPNQPLIQDEDEQTTDYGENGMIQFKQVQ.

The PP-loop motif signature appears at 52–57 (SGGKDS). Positions 127, 130, and 218 each coordinate [4Fe-4S] cluster.

The protein belongs to the TtcA family. As to quaternary structure, homodimer. The cofactor is Mg(2+). [4Fe-4S] cluster is required as a cofactor.

Its subcellular location is the cytoplasm. It catalyses the reaction cytidine(32) in tRNA + S-sulfanyl-L-cysteinyl-[cysteine desulfurase] + AH2 + ATP = 2-thiocytidine(32) in tRNA + L-cysteinyl-[cysteine desulfurase] + A + AMP + diphosphate + H(+). It functions in the pathway tRNA modification. Functionally, catalyzes the ATP-dependent 2-thiolation of cytidine in position 32 of tRNA, to form 2-thiocytidine (s(2)C32). The sulfur atoms are provided by the cysteine/cysteine desulfurase (IscS) system. The sequence is that of tRNA-cytidine(32) 2-sulfurtransferase from Actinobacillus pleuropneumoniae serotype 5b (strain L20).